The following is a 68-amino-acid chain: DNA-directed RNA polymerase subunit omega (68 aa).

It belongs to the RNA polymerase subunit omega family. In terms of assembly, the RNAP catalytic core consists of 2 alpha, 1 beta, 1 beta' and 1 omega subunit. When a sigma factor is associated with the core the holoenzyme is formed, which can initiate transcription.

It carries out the reaction RNA(n) + a ribonucleoside 5'-triphosphate = RNA(n+1) + diphosphate. Promotes RNA polymerase assembly. Latches the N- and C-terminal regions of the beta' subunit thereby facilitating its interaction with the beta and alpha subunits. This Nitrosospira multiformis (strain ATCC 25196 / NCIMB 11849 / C 71) protein is DNA-directed RNA polymerase subunit omega.